Here is a 154-residue protein sequence, read N- to C-terminus: Ribonuclease H (154 aa).

The 141-residue stretch at 1 to 141 (MKRIEAYTDG…ADELARAGME (141 aa)) folds into the RNase H type-1 domain. Mg(2+)-binding residues include D9, E47, D69, and D133.

The protein belongs to the RNase H family. Monomer. It depends on Mg(2+) as a cofactor.

It localises to the cytoplasm. It carries out the reaction Endonucleolytic cleavage to 5'-phosphomonoester.. Functionally, endonuclease that specifically degrades the RNA of RNA-DNA hybrids. The protein is Ribonuclease H of Brucella abortus (strain 2308).